A 148-amino-acid chain; its full sequence is Putative nickel-responsive regulator (148 aa).

Positions 88, 99, 101, and 107 each coordinate Ni(2+).

It belongs to the transcriptional regulatory CopG/NikR family. In terms of assembly, homotetramer. Ni(2+) is required as a cofactor.

Functionally, transcriptional regulator. The polypeptide is Putative nickel-responsive regulator (Helicobacter pylori (strain J99 / ATCC 700824) (Campylobacter pylori J99)).